The sequence spans 160 residues: S-ribosylhomocysteine lyase (160 aa).

H57, H61, and C127 together coordinate Fe cation.

Belongs to the LuxS family. Homodimer. The cofactor is Fe cation.

The catalysed reaction is S-(5-deoxy-D-ribos-5-yl)-L-homocysteine = (S)-4,5-dihydroxypentane-2,3-dione + L-homocysteine. Involved in the synthesis of autoinducer 2 (AI-2) which is secreted by bacteria and is used to communicate both the cell density and the metabolic potential of the environment. The regulation of gene expression in response to changes in cell density is called quorum sensing. Catalyzes the transformation of S-ribosylhomocysteine (RHC) to homocysteine (HC) and 4,5-dihydroxy-2,3-pentadione (DPD). The chain is S-ribosylhomocysteine lyase from Streptococcus pyogenes serotype M4 (strain MGAS10750).